The chain runs to 459 residues: Chromosomal replication initiator protein DnaA (459 aa).

Residues 1–74 (MQKIETFWYF…DEMAQGHFNE (74 aa)) form a domain I, interacts with DnaA modulators region. The tract at residues 74-122 (EKIHFKLELKDPAEIKTATIKAPEPKSKEDKKPPTDKAHGTTARKTNPS) is domain II. The interval 91–123 (ATIKAPEPKSKEDKKPPTDKAHGTTARKTNPSR) is disordered. Positions 96–112 (PEPKSKEDKKPPTDKAH) are enriched in basic and acidic residues. A domain III, AAA+ region region spans residues 123–339 (RLNPAFTFDA…GALKRVLAYS (217 aa)). Positions 167, 169, 170, and 171 each coordinate ATP. The domain IV, binds dsDNA stretch occupies residues 340-459 (RFTGHPISLD…YSTLIHILRG (120 aa)).

This sequence belongs to the DnaA family. As to quaternary structure, oligomerizes as a right-handed, spiral filament on DNA at oriC.

The protein localises to the cytoplasm. Its function is as follows. Plays an essential role in the initiation and regulation of chromosomal replication. ATP-DnaA binds to the origin of replication (oriC) to initiate formation of the DNA replication initiation complex once per cell cycle. Binds the DnaA box (a 9 base pair repeat at the origin) and separates the double-stranded (ds)DNA. Forms a right-handed helical filament on oriC DNA; dsDNA binds to the exterior of the filament while single-stranded (ss)DNA is stabiized in the filament's interior. The ATP-DnaA-oriC complex binds and stabilizes one strand of the AT-rich DNA unwinding element (DUE), permitting loading of DNA polymerase. After initiation quickly degrades to an ADP-DnaA complex that is not apt for DNA replication. Binds acidic phospholipids. The polypeptide is Chromosomal replication initiator protein DnaA (Nitrosomonas eutropha (strain DSM 101675 / C91 / Nm57)).